Reading from the N-terminus, the 546-residue chain is Arginine--tRNA ligase (546 aa).

The 'HIGH' region signature appears at 122–132; that stretch reads ANPTGPFTVGH.

Belongs to the class-I aminoacyl-tRNA synthetase family. In terms of assembly, monomer.

It is found in the cytoplasm. It catalyses the reaction tRNA(Arg) + L-arginine + ATP = L-arginyl-tRNA(Arg) + AMP + diphosphate. The polypeptide is Arginine--tRNA ligase (argS) (Thermotoga maritima (strain ATCC 43589 / DSM 3109 / JCM 10099 / NBRC 100826 / MSB8)).